The chain runs to 310 residues: Solute carrier family 25 member 47 (310 aa).

Solcar repeat units lie at residues 1 to 80 (MDFV…CLAH), 93 to 208 (PTKA…LSEW), and 217 to 304 (PDVL…VLRL). The next 6 membrane-spanning stretches (helical) occupy residues 3 to 23 (FVAG…LDTV), 49 to 69 (LWGF…VSSV), 98 to 116 (ITLS…TSPT), 192 to 212 (GHSF…LTPA), 219 to 239 (VLGV…VATP), and 275 to 295 (VLFK…MVVF).

This sequence belongs to the mitochondrial carrier (TC 2.A.29) family.

It localises to the mitochondrion inner membrane. It is found in the mitochondrion outer membrane. It catalyses the reaction NAD(+)(in) = NAD(+)(out). The catalysed reaction is acetyl-CoA(in) = acetyl-CoA(out). In terms of biological role, mitochondrial NAD(+) transporter that acts as a 'metabolic gate' in hepatic lipogenesis. Provides NAD(+) substrate to mitochondrial SIRT3 deacetylase and enables its NAD(+)-dependent activities in mitochondrial energy metabolism. This triggers downstream activation of PRKAA1/AMPK-alpha signaling cascade that negatively regulates sterol regulatory element-binding protein (SREBP) transcriptional activities and ATP-consuming lipogenesis to restore cellular energy balance. May transport other mitochondrial metabolites having an aromatic nucleotide and phosphate groups, such as acetyl-CoA. Does not transport amino acids. The transport mechanism remains to be elucidated. The sequence is that of Solute carrier family 25 member 47 from Rattus norvegicus (Rat).